The chain runs to 45 residues: Monellin chain A (45 aa).

As to quaternary structure, heterodimer of an A chain and a B chain.

Taste-modifying protein; intensely sweet-tasting protein. In Dioscoreophyllum cumminsii (Serendipity berry), this protein is Monellin chain A.